We begin with the raw amino-acid sequence, 488 residues long: Malonate-semialdehyde dehydrogenase 1 (488 aa).

NAD(+)-binding residues include phenylalanine 156, lysine 180, glutamate 183, arginine 184, serine 233, and serine 255. Cysteine 288 (nucleophile) is an active-site residue. Residue glutamate 387 coordinates NAD(+).

It belongs to the aldehyde dehydrogenase family. IolA subfamily. In terms of assembly, homotetramer.

It carries out the reaction 3-oxopropanoate + NAD(+) + CoA + H2O = hydrogencarbonate + acetyl-CoA + NADH + H(+). The catalysed reaction is 2-methyl-3-oxopropanoate + NAD(+) + CoA + H2O = propanoyl-CoA + hydrogencarbonate + NADH + H(+). It participates in polyol metabolism; myo-inositol degradation into acetyl-CoA; acetyl-CoA from myo-inositol: step 7/7. Its function is as follows. Catalyzes the oxidation of malonate semialdehyde (MSA) and methylmalonate semialdehyde (MMSA) into acetyl-CoA and propanoyl-CoA, respectively. Is involved in a myo-inositol catabolic pathway. Bicarbonate, and not CO2, is the end-product of the enzymatic reaction. This chain is Malonate-semialdehyde dehydrogenase 1, found in Geobacillus kaustophilus (strain HTA426).